The following is a 386-amino-acid chain: Histidinol-phosphate aminotransferase (386 aa).

The span at 1–11 shows a compositional bias: polar residues; that stretch reads MMVRKSTASNR. Residues 1-22 form a disordered region; the sequence is MMVRKSTASNRRLQDKGDEEPV. Position 248 is an N6-(pyridoxal phosphate)lysine (lysine 248).

The protein belongs to the class-II pyridoxal-phosphate-dependent aminotransferase family. Histidinol-phosphate aminotransferase subfamily. Homodimer. The cofactor is pyridoxal 5'-phosphate.

It carries out the reaction L-histidinol phosphate + 2-oxoglutarate = 3-(imidazol-4-yl)-2-oxopropyl phosphate + L-glutamate. Its pathway is amino-acid biosynthesis; L-histidine biosynthesis; L-histidine from 5-phospho-alpha-D-ribose 1-diphosphate: step 7/9. In Moorella thermoacetica (strain ATCC 39073 / JCM 9320), this protein is Histidinol-phosphate aminotransferase.